The following is a 137-amino-acid chain: Large ribosomal subunit protein uL16c (137 aa).

This sequence belongs to the universal ribosomal protein uL16 family. In terms of assembly, part of the 50S ribosomal subunit.

It is found in the plastid. The polypeptide is Large ribosomal subunit protein uL16c (rpl16) (Helicosporidium sp. subsp. Simulium jonesii (Green alga)).